The primary structure comprises 448 residues: Fibulin-5 (448 aa).

A signal peptide spans 1–23; sequence MPGIKRILTVTILALCLPSPGNA. One can recognise an EGF-like 1; calcium-binding domain in the interval 42-82; it reads DIDECRTIPEACRGDMMCVNQNGRYLCIPRTNPVYRGPYSN. Cystine bridges form between Cys46–Cys59, Cys53–Cys68, Cys131–Cys144, Cys138–Cys153, Cys155–Cys166, Cys172–Cys181, Cys177–Cys190, Cys192–Cys205, Cys211–Cys221, Cys217–Cys230, Cys232–Cys245, Cys251–Cys262, Cys258–Cys271, Cys273–Cys286, Cys292–Cys305, Cys299–Cys314, and Cys320–Cys332. The short motif at 54-56 is the Cell attachment site element; it reads RGD. The 41-residue stretch at 127–167 folds into the EGF-like 2; calcium-binding domain; it reads DVDECATDSHQCNPTQICINTEGGYTCSCTDGYWLLEGQCL. One can recognise an EGF-like 3; calcium-binding domain in the interval 168-206; it reads DIDECRYGYCQQLCANVPGSYSCTCNPGFTLNEDGRSCQ. Residues 207–246 enclose the EGF-like 4; calcium-binding domain; it reads DVNECATENPCVQTCVNTYGSFICRCDPGYELEEDGVHCS. The interval 245–448 is interaction with LOXL1; it reads CSDMDECSFS…LRIYVSQYPF (204 aa). Positions 247–287 constitute an EGF-like 5; calcium-binding domain; sequence DMDECSFSEFLCQHECVNQPGTYFCSCPPGYILLDDNRSCQ. N-linked (GlcNAc...) asparagine glycans are attached at residues Asn283 and Asn296. The region spanning 288–333 is the EGF-like 6; calcium-binding domain; the sequence is DINECEHRNHTCNLQQTCYNLQGGFKCIDPIRCEEPYLRISDNRCM.

It belongs to the fibulin family. Homodimer. Monomer, homodimerizes in presence of Ca(2+). Interacts with ELN. Interacts (via N-terminus) with the integrins ITGAV/ITGB3, ITGAV/ITGB5 and ITGA9/ITGB1. Interacts with FBN1 (via N-terminal domain). Forms a ternary complex with ELN and FBN1. Interacts with EFEMP2 with moderate affinity. Interacts with LOXL1. Post-translationally, N-glycosylated.

Its subcellular location is the secreted. It localises to the extracellular space. The protein localises to the extracellular matrix. Functionally, essential for elastic fiber formation, is involved in the assembly of continuous elastin (ELN) polymer and promotes the interaction of microfibrils and ELN. Stabilizes and organizes elastic fibers in the skin, lung and vasculature. Promotes adhesion of endothelial cells through interaction of integrins and the RGD motif. Vascular ligand for integrin receptors which may play a role in vascular development and remodeling. May act as an adapter that mediates the interaction between FBN1 and ELN. The chain is Fibulin-5 (FBLN5) from Pongo abelii (Sumatran orangutan).